Reading from the N-terminus, the 152-residue chain is 3-hydroxyacyl-[acyl-carrier-protein] dehydratase FabZ (152 aa).

Residue H54 is part of the active site.

It belongs to the thioester dehydratase family. FabZ subfamily.

It localises to the cytoplasm. It catalyses the reaction a (3R)-hydroxyacyl-[ACP] = a (2E)-enoyl-[ACP] + H2O. In terms of biological role, involved in unsaturated fatty acids biosynthesis. Catalyzes the dehydration of short chain beta-hydroxyacyl-ACPs and long chain saturated and unsaturated beta-hydroxyacyl-ACPs. The protein is 3-hydroxyacyl-[acyl-carrier-protein] dehydratase FabZ of Roseobacter denitrificans (strain ATCC 33942 / OCh 114) (Erythrobacter sp. (strain OCh 114)).